The following is a 156-amino-acid chain: Arginine repressor (156 aa).

Belongs to the ArgR family.

It is found in the cytoplasm. The protein operates within amino-acid biosynthesis; L-arginine biosynthesis [regulation]. Functionally, regulates arginine biosynthesis genes. This is Arginine repressor from Shewanella sediminis (strain HAW-EB3).